Consider the following 390-residue polypeptide: Galactokinase (390 aa).

Position 33 to 36 (33 to 36 (EHTD)) interacts with substrate. ATP is bound by residues S67 and 124-130 (GSGLSSS). Residues S130 and E162 each coordinate Mg(2+). The active-site Proton acceptor is D174. Y224 is a binding site for substrate.

Belongs to the GHMP kinase family. GalK subfamily.

The protein localises to the cytoplasm. It catalyses the reaction alpha-D-galactose + ATP = alpha-D-galactose 1-phosphate + ADP + H(+). Its pathway is carbohydrate metabolism; galactose metabolism. Functionally, catalyzes the transfer of the gamma-phosphate of ATP to D-galactose to form alpha-D-galactose-1-phosphate (Gal-1-P). The polypeptide is Galactokinase (Streptococcus mutans serotype c (strain ATCC 700610 / UA159)).